The primary structure comprises 891 residues: DNA mismatch repair protein MutS (891 aa).

An ATP-binding site is contributed by 646-653 (GPNMAGKS).

Belongs to the DNA mismatch repair MutS family.

Its function is as follows. This protein is involved in the repair of mismatches in DNA. It is possible that it carries out the mismatch recognition step. This protein has a weak ATPase activity. The protein is DNA mismatch repair protein MutS of Rickettsia massiliae (strain Mtu5).